A 407-amino-acid chain; its full sequence is Queuine tRNA-ribosyltransferase-like protein (407 aa).

This sequence belongs to the queuine tRNA-ribosyltransferase family.

The sequence is that of Queuine tRNA-ribosyltransferase-like protein from Plasmodium falciparum (isolate 3D7).